Reading from the N-terminus, the 187-residue chain is Ribosome-recycling factor (187 aa).

The protein belongs to the RRF family.

It localises to the cytoplasm. Responsible for the release of ribosomes from messenger RNA at the termination of protein biosynthesis. May increase the efficiency of translation by recycling ribosomes from one round of translation to another. In Rhodopseudomonas palustris (strain BisB18), this protein is Ribosome-recycling factor.